The sequence spans 61 residues: MKFTATFLVLSLVVLMAEPGECFLGALIKGAIHGGRFIHGMIQNHHGYDEQQELNKRAVDE.

An N-terminal signal peptide occupies residues Met-1–Cys-22. A propeptide spanning residues Tyr-48–Glu-61 is cleaved from the precursor.

Belongs to the pleurocidin family.

The protein localises to the secreted. Its function is as follows. Antimicrobial peptide. The protein is Pleurocidin-like peptide WF3 (ple3) of Pseudopleuronectes americanus (Winter flounder).